Reading from the N-terminus, the 407-residue chain is Keratin, type I cuticular Ha2 (407 aa).

Positions 1–55 (MPSVCMPTTYRPASCLSKTYLSSSCQPSNRRPTGCISSSMGTYGLFCEGAFNGNE) are head. An IF rod domain is found at 55 to 366 (EKETMQVLND…GLLESEDSKL (312 aa)). Residues 56–90 (KETMQVLNDRLANYLEKVRQLEKENAELEGKIQDV) are coil 1A. Residues 91–101 (YQGQVLTMCPD) are linker 1. Positions 102–202 (YQSYFQTIEE…HEEEVGVLRQ (101 aa)) are coil 1B. The segment at 203-218 (QLGDRLNIEVDAAPPV) is linker 12. The coil 2 stretch occupies residues 219-362 (DLTRMLEEMR…DTYRGLLESE (144 aa)). Residues 363–407 (DSKLPCNPCSTPSCQPCAPSPGVSRTVCVPHTVCVPCSPCLQTRY) are tail.

The protein belongs to the intermediate filament family. As to expression, cuticle of the hair shaft.

This chain is Keratin, type I cuticular Ha2 (Krt32), found in Mus musculus (Mouse).